Here is a 303-residue protein sequence, read N- to C-terminus: Glycine--tRNA ligase alpha subunit (303 aa).

Belongs to the class-II aminoacyl-tRNA synthetase family. As to quaternary structure, tetramer of two alpha and two beta subunits.

The protein localises to the cytoplasm. The enzyme catalyses tRNA(Gly) + glycine + ATP = glycyl-tRNA(Gly) + AMP + diphosphate. This Enterobacter sp. (strain 638) protein is Glycine--tRNA ligase alpha subunit.